The sequence spans 591 residues: Potassium-transporting ATPase potassium-binding subunit (591 aa).

The next 10 membrane-spanning stretches (helical) occupy residues 6 to 26 (WFQI…LGVF), 63 to 83 (WTEY…MLYI), 137 to 157 (GLAY…IAFI), 179 to 199 (VLWV…SQGV), 272 to 292 (LSNL…TYTL), 303 to 323 (WAVW…VYWA), 405 to 425 (AGMY…GLMV), 444 to 464 (AMLV…ISSV), 510 to 530 (VAIG…MLAI), and 553 to 573 (LFSV…FFPA).

Belongs to the KdpA family. The system is composed of three essential subunits: KdpA, KdpB and KdpC.

It is found in the cell inner membrane. In terms of biological role, part of the high-affinity ATP-driven potassium transport (or Kdp) system, which catalyzes the hydrolysis of ATP coupled with the electrogenic transport of potassium into the cytoplasm. This subunit binds the periplasmic potassium ions and delivers the ions to the membrane domain of KdpB through an intramembrane tunnel. This is Potassium-transporting ATPase potassium-binding subunit from Koribacter versatilis (strain Ellin345).